Consider the following 922-residue polypeptide: Translation initiation factor IF-2 (922 aa).

Residues 243–329 (AAREAAKLAE…GKSKSGQEET (87 aa)) are disordered. The segment covering 250 to 264 (LAEAQKAAAPAPAAP) has biased composition (low complexity). A compositionally biased stretch (basic and acidic residues) spans 267–298 (KTLHKPDKPAAAKGAKGPDKKPAGAWKDDAAR). The region spanning 422 to 589 (ARPPVVTVMG…AILLQAEVLE (168 aa)) is the tr-type G domain. The segment at 431 to 438 (GHVDHGKT) is G1. 431 to 438 (GHVDHGKT) contacts GTP. Positions 456 to 460 (GITQH) are G2. A G3 region spans residues 477–480 (DTPG). Residues 477 to 481 (DTPGH) and 531 to 534 (NKID) contribute to the GTP site. Positions 531–534 (NKID) are G4. Residues 567-569 (SAK) are G5.

Belongs to the TRAFAC class translation factor GTPase superfamily. Classic translation factor GTPase family. IF-2 subfamily.

The protein resides in the cytoplasm. One of the essential components for the initiation of protein synthesis. Protects formylmethionyl-tRNA from spontaneous hydrolysis and promotes its binding to the 30S ribosomal subunits. Also involved in the hydrolysis of GTP during the formation of the 70S ribosomal complex. The chain is Translation initiation factor IF-2 from Thiobacillus denitrificans (strain ATCC 25259 / T1).